The primary structure comprises 57 residues: Potassium channel toxin alpha-KTx 17.2 (57 aa).

The N-terminal stretch at 1 to 26 (MKTIIVLLLLTIVAAAVVESSPKARR) is a signal peptide. 3 disulfide bridges follow: Cys-30/Cys-46, Cys-36/Cys-51, and Cys-40/Cys-53.

It belongs to the short scorpion toxin superfamily. Potassium channel inhibitor family. Alpha-KTx 17 subfamily. As to expression, expressed by the venom gland.

Its subcellular location is the secreted. In terms of biological role, inhibits voltage-gated potassium channels. The sequence is that of Potassium channel toxin alpha-KTx 17.2 from Lychas mucronatus (Chinese swimming scorpion).